A 2849-amino-acid chain; its full sequence is Immunoglobulin-like and fibronectin type III domain-containing protein 1 (2849 aa).

A disordered region spans residues 82–108 (AGSAARPDGSGSESLAASSSWKPRRRL). Residues 90–101 (GSGSESLAASSS) are compositionally biased toward low complexity. Residues 187–277 (PDFKQKPVTL…GEATCSVRLT (91 aa)) form the Ig-like 1 domain. A coiled-coil region spans residues 347–380 (IVDFRGMLRKLQEMKKEQEDRMAQYVSAIANLRH). Residues 468–557 (PRVVVPLAET…SSAWLVVEGG (90 aa)) form the Ig-like 2 domain. 12 disordered regions span residues 577–600 (LASE…RGSL), 652–760 (VTLP…AGQR), 864–924 (YPGQ…DLRS), 962–981 (VGQR…IGPQ), 1061–1103 (EEEF…EGMA), 1221–1258 (TVGS…SSWG), 1312–1338 (STVG…SEGH), 1350–1384 (RDGS…PDGE), 1498–1523 (ETGR…MGSE), 1654–1675 (EWKD…SEEI), 1724–1780 (QQGV…ATSH), and 1827–2055 (GAAG…SMDH). The segment covering 717 to 742 (HPRDRRLESRGEGQEHSEGHGSELDR) has biased composition (basic and acidic residues). Residues 866–880 (GQTSEGNDTQKSSLS) are compositionally biased toward polar residues. Residues 1070–1084 (RSQGKGSRGGMGLGG) are compositionally biased toward gly residues. A compositionally biased stretch (polar residues) spans 1873-1882 (SKPQEPQNEL). 2 stretches are compositionally biased toward basic and acidic residues: residues 1988–2004 (SEDR…DRRQ) and 2012–2021 (SRRDTQEGRS). In terms of domain architecture, Ig-like 3 spans 2034 to 2137 (PRSRYQPGTG…GCQHSEASLT (104 aa)). Fibronectin type-III domains follow at residues 2244–2339 (PPQG…VAPE), 2344–2443 (PPSA…MRPP), and 2445–2540 (PVRD…AMPA). The 85-residue stretch at 2544-2628 (PRFLMDSGTK…LRNLQGKEAT (85 aa)) folds into the Ig-like 4 domain. Residues 2641–2735 (APGSIYLQEN…TSQPWCIPRQ (95 aa)) enclose the Fibronectin type-III 4 domain. An Ig-like 5 domain is found at 2749–2845 (PDLSQKPRFL…AVSTATLIVT (97 aa)).

Interacts with FLNC. Interacts with KY. In terms of tissue distribution, isoform 1, isoform 3 and isoform 4 are expressed in skeletal muscle while isoform 2 is detected in both skeletal muscle and heart (at protein level).

Its subcellular location is the nucleus. The protein resides in the cytoplasm. It localises to the myofibril. The protein localises to the sarcomere. It is found in the z line. The polypeptide is Immunoglobulin-like and fibronectin type III domain-containing protein 1 (Igfn1) (Mus musculus (Mouse)).